The sequence spans 454 residues: Allantoinase (454 aa).

6 residues coordinate Zn(2+): His60, His62, Lys147, His183, His239, and Asp312. Lys147 is subject to N6-carboxylysine.

The protein belongs to the metallo-dependent hydrolases superfamily. Allantoinase family. Homotetramer. The cofactor is Zn(2+). In terms of processing, carboxylation allows a single lysine to coordinate two zinc ions.

The catalysed reaction is (S)-allantoin + H2O = allantoate + H(+). It participates in nitrogen metabolism; (S)-allantoin degradation; allantoate from (S)-allantoin: step 1/1. Catalyzes the conversion of allantoin (5-ureidohydantoin) to allantoic acid by hydrolytic cleavage of the five-member hydantoin ring. The polypeptide is Allantoinase (Bacillus velezensis (strain DSM 23117 / BGSC 10A6 / LMG 26770 / FZB42) (Bacillus amyloliquefaciens subsp. plantarum)).